The chain runs to 133 residues: Small ribosomal subunit protein uS9 (133 aa).

Residues 98–113 (RKPLKTEGHLSRDPRA) are compositionally biased toward basic and acidic residues. Positions 98-133 (RKPLKTEGHLSRDPRAKERRKYGLKKARKAPQFSKR) are disordered. A compositionally biased stretch (basic residues) spans 114–133 (KERRKYGLKKARKAPQFSKR).

It belongs to the universal ribosomal protein uS9 family.

The polypeptide is Small ribosomal subunit protein uS9 (Synechococcus sp. (strain CC9902)).